Reading from the N-terminus, the 97-residue chain is Aspartyl/glutamyl-tRNA(Asn/Gln) amidotransferase subunit C (97 aa).

It belongs to the GatC family. In terms of assembly, heterotrimer of A, B and C subunits.

The catalysed reaction is L-glutamyl-tRNA(Gln) + L-glutamine + ATP + H2O = L-glutaminyl-tRNA(Gln) + L-glutamate + ADP + phosphate + H(+). It catalyses the reaction L-aspartyl-tRNA(Asn) + L-glutamine + ATP + H2O = L-asparaginyl-tRNA(Asn) + L-glutamate + ADP + phosphate + 2 H(+). In terms of biological role, allows the formation of correctly charged Asn-tRNA(Asn) or Gln-tRNA(Gln) through the transamidation of misacylated Asp-tRNA(Asn) or Glu-tRNA(Gln) in organisms which lack either or both of asparaginyl-tRNA or glutaminyl-tRNA synthetases. The reaction takes place in the presence of glutamine and ATP through an activated phospho-Asp-tRNA(Asn) or phospho-Glu-tRNA(Gln). The protein is Aspartyl/glutamyl-tRNA(Asn/Gln) amidotransferase subunit C of Prochlorococcus marinus (strain MIT 9515).